Reading from the N-terminus, the 214-residue chain is Glycerol-3-phosphate acyltransferase (214 aa).

A run of 5 helical transmembrane segments spans residues 8–28 (LILAYLLGSIPTGLWIGQIFF), 70–90 (LLPLFLHINGISPMIFGLIAV), 111–131 (AGVVLGFSPLFFSYLIIIFIV), 144–164 (IVVAGFAIISVLIFPLLGIIL), and 165–185 (PSYDLLFTLIIILLASIILIR).

This sequence belongs to the PlsY family. Probably interacts with PlsX.

Its subcellular location is the cell membrane. The catalysed reaction is an acyl phosphate + sn-glycerol 3-phosphate = a 1-acyl-sn-glycero-3-phosphate + phosphate. Its pathway is lipid metabolism; phospholipid metabolism. Catalyzes the transfer of an acyl group from acyl-phosphate (acyl-PO(4)) to glycerol-3-phosphate (G3P) to form lysophosphatidic acid (LPA). This enzyme utilizes acyl-phosphate as fatty acyl donor, but not acyl-CoA or acyl-ACP. The chain is Glycerol-3-phosphate acyltransferase from Streptococcus gordonii (strain Challis / ATCC 35105 / BCRC 15272 / CH1 / DL1 / V288).